Here is a 329-residue protein sequence, read N- to C-terminus: NADH-quinone oxidoreductase subunit H (329 aa).

8 helical membrane-spanning segments follow: residues 11 to 31, 81 to 101, 114 to 134, 154 to 174, 187 to 207, 238 to 258, 270 to 290, and 309 to 329; these read IVVAILKAIVILLVVVVCGAL, LIFTLAPIVAMSALLMAFAVV, IGLLFFFAMAGLAVYAVLFAG, ISYEVFMALALMGIVAQTGSF, TWFIIPQFLGFCTFFIAGVAV, FFVGEYIGIVLISALLVTLFF, QLSFIWFALKTAFFIMLFILL, and FCLPLTLLNLLVTGAFVLAAQ.

Belongs to the complex I subunit 1 family. In terms of assembly, NDH-1 is composed of 13 different subunits. Subunits NuoA, H, J, K, L, M, N constitute the membrane sector of the complex.

It is found in the cell inner membrane. It carries out the reaction a quinone + NADH + 5 H(+)(in) = a quinol + NAD(+) + 4 H(+)(out). Functionally, NDH-1 shuttles electrons from NADH, via FMN and iron-sulfur (Fe-S) centers, to quinones in the respiratory chain. The immediate electron acceptor for the enzyme in this species is believed to be ubiquinone. Couples the redox reaction to proton translocation (for every two electrons transferred, four hydrogen ions are translocated across the cytoplasmic membrane), and thus conserves the redox energy in a proton gradient. This subunit may bind ubiquinone. This Azotobacter vinelandii (strain DJ / ATCC BAA-1303) protein is NADH-quinone oxidoreductase subunit H.